We begin with the raw amino-acid sequence, 289 residues long: Protoheme IX farnesyltransferase 2 (289 aa).

A run of 9 helical transmembrane segments spans residues 1-21 (MIKPGIIMGNLISVTGGFLLA), 28-48 (LTLMLMTILGLSLVVASGCGL), 76-96 (YSVLVFSLALGLIGFGLLAIF), 100-120 (IALLFAVIGYLVYVGIYSLYM), 125-145 (VYGTLIGSFSGAVPPVVGYCA), 155-175 (VILLLMFSLWQMPHSYAIAIF), 199-219 (LHIVLYIAVFSLVSALLPLAG), 221-241 (TGIAFMAVTCATSLWWLGMAL), and 260-280 (CSIVTITALSIAMAMDFQLVV).

It belongs to the UbiA prenyltransferase family. Protoheme IX farnesyltransferase subfamily.

The protein localises to the cell inner membrane. The catalysed reaction is heme b + (2E,6E)-farnesyl diphosphate + H2O = Fe(II)-heme o + diphosphate. It functions in the pathway porphyrin-containing compound metabolism; heme O biosynthesis; heme O from protoheme: step 1/1. Functionally, converts heme B (protoheme IX) to heme O by substitution of the vinyl group on carbon 2 of heme B porphyrin ring with a hydroxyethyl farnesyl side group. The chain is Protoheme IX farnesyltransferase 2 from Shewanella woodyi (strain ATCC 51908 / MS32).